An 877-amino-acid chain; its full sequence is Alanine--tRNA ligase (877 aa).

Zn(2+) contacts are provided by His562, His566, Cys664, and His668.

This sequence belongs to the class-II aminoacyl-tRNA synthetase family. The cofactor is Zn(2+).

It is found in the cytoplasm. It catalyses the reaction tRNA(Ala) + L-alanine + ATP = L-alanyl-tRNA(Ala) + AMP + diphosphate. In terms of biological role, catalyzes the attachment of alanine to tRNA(Ala) in a two-step reaction: alanine is first activated by ATP to form Ala-AMP and then transferred to the acceptor end of tRNA(Ala). Also edits incorrectly charged Ser-tRNA(Ala) and Gly-tRNA(Ala) via its editing domain. The protein is Alanine--tRNA ligase of Synechocystis sp. (strain ATCC 27184 / PCC 6803 / Kazusa).